Consider the following 500-residue polypeptide: Probable cytosol aminopeptidase (500 aa).

Mn(2+) is bound by residues Lys262 and Asp267. The active site involves Lys274. Mn(2+)-binding residues include Asp285, Asp344, and Glu346. Residue Arg348 is part of the active site.

This sequence belongs to the peptidase M17 family. It depends on Mn(2+) as a cofactor.

It localises to the cytoplasm. The enzyme catalyses Release of an N-terminal amino acid, Xaa-|-Yaa-, in which Xaa is preferably Leu, but may be other amino acids including Pro although not Arg or Lys, and Yaa may be Pro. Amino acid amides and methyl esters are also readily hydrolyzed, but rates on arylamides are exceedingly low.. It carries out the reaction Release of an N-terminal amino acid, preferentially leucine, but not glutamic or aspartic acids.. Functionally, presumably involved in the processing and regular turnover of intracellular proteins. Catalyzes the removal of unsubstituted N-terminal amino acids from various peptides. This Ehrlichia ruminantium (strain Welgevonden) protein is Probable cytosol aminopeptidase.